Consider the following 238-residue polypeptide: Epoxyqueuosine reductase QueH (238 aa).

[4Fe-4S] cluster-binding residues include C43, C44, C129, and C132. C211 and C213 form a disulfide bridge.

This sequence belongs to the QueH family.

It catalyses the reaction epoxyqueuosine(34) in tRNA + AH2 = queuosine(34) in tRNA + A + H2O. It participates in tRNA modification; tRNA-queuosine biosynthesis. Functionally, catalyzes the conversion of epoxyqueuosine (oQ) to queuosine (Q), which is a hypermodified base found in the wobble positions of tRNA(Asp), tRNA(Asn), tRNA(His) and tRNA(Tyr). The polypeptide is Epoxyqueuosine reductase QueH (Staphylococcus epidermidis (strain ATCC 12228 / FDA PCI 1200)).